Reading from the N-terminus, the 384-residue chain is Ribosomal RNA small subunit methyltransferase H (384 aa).

Residues 99-101 (GGH), D118, Y145, D169, and Q176 each bind S-adenosyl-L-methionine.

This sequence belongs to the methyltransferase superfamily. RsmH family.

It localises to the cytoplasm. The catalysed reaction is cytidine(1402) in 16S rRNA + S-adenosyl-L-methionine = N(4)-methylcytidine(1402) in 16S rRNA + S-adenosyl-L-homocysteine + H(+). Functionally, specifically methylates the N4 position of cytidine in position 1402 (C1402) of 16S rRNA. This Mycobacteroides abscessus (strain ATCC 19977 / DSM 44196 / CCUG 20993 / CIP 104536 / JCM 13569 / NCTC 13031 / TMC 1543 / L948) (Mycobacterium abscessus) protein is Ribosomal RNA small subunit methyltransferase H.